We begin with the raw amino-acid sequence, 120 residues long: Large ribosomal subunit protein bL12 (120 aa).

This sequence belongs to the bacterial ribosomal protein bL12 family. Homodimer. Part of the ribosomal stalk of the 50S ribosomal subunit. Forms a multimeric L10(L12)X complex, where L10 forms an elongated spine to which 2 to 4 L12 dimers bind in a sequential fashion. Binds GTP-bound translation factors.

Its function is as follows. Forms part of the ribosomal stalk which helps the ribosome interact with GTP-bound translation factors. Is thus essential for accurate translation. This Lactobacillus gasseri (strain ATCC 33323 / DSM 20243 / BCRC 14619 / CIP 102991 / JCM 1131 / KCTC 3163 / NCIMB 11718 / NCTC 13722 / AM63) protein is Large ribosomal subunit protein bL12.